A 526-amino-acid polypeptide reads, in one-letter code: Putative UDP-glucuronosyltransferase ugt-48 (526 aa).

A signal peptide spans 1 to 17 (MLLRILTFLAVCQVTTS). N-linked (GlcNAc...) asparagine glycosylation is found at asparagine 58 and asparagine 305. Residues 489–509 (FYNLDIIITAASIPVLIFIVL) traverse the membrane as a helical segment. Asparagine 513 carries N-linked (GlcNAc...) asparagine glycosylation.

It belongs to the UDP-glycosyltransferase family. In terms of assembly, interacts with cmd-1 in the presence of Ca(2+).

Its subcellular location is the membrane. The catalysed reaction is glucuronate acceptor + UDP-alpha-D-glucuronate = acceptor beta-D-glucuronoside + UDP + H(+). The sequence is that of Putative UDP-glucuronosyltransferase ugt-48 (ugt-48) from Caenorhabditis elegans.